A 205-amino-acid chain; its full sequence is Ribosomal RNA small subunit methyltransferase G 1 (205 aa).

Residues G77, L82, 100–102 (EKS), 129–130 (LE), and R138 each bind S-adenosyl-L-methionine.

The protein belongs to the methyltransferase superfamily. RNA methyltransferase RsmG family.

It localises to the cytoplasm. The catalysed reaction is guanosine(527) in 16S rRNA + S-adenosyl-L-methionine = N(7)-methylguanosine(527) in 16S rRNA + S-adenosyl-L-homocysteine. Its function is as follows. Specifically methylates the N7 position of guanine in position 527 of 16S rRNA. This is Ribosomal RNA small subunit methyltransferase G 1 from Bdellovibrio bacteriovorus (strain ATCC 15356 / DSM 50701 / NCIMB 9529 / HD100).